The following is a 31-amino-acid chain: Diuretic hormone class 2 (31 aa).

A Proline amide modification is found at Pro31.

This sequence belongs to the diuretic hormone class 2 family.

The protein localises to the secreted. Regulation of fluid secretion. Stimulates primary urine secretion by Malpighian tubules and causes a dose-dependent stimulation of cAMP levels in the tubules. Has a nonselective effect on Na(+)/K(+) ion transport. In vitro, primarily elevates intracellular Ca(2+). The protein is Diuretic hormone class 2 of Apis mellifera (Honeybee).